Here is a 226-residue protein sequence, read N- to C-terminus: Uridylate kinase (226 aa).

ATP is bound at residue lysine 9–lysine 13. Glycine 46 is a UMP binding site. ATP-binding residues include glycine 47 and arginine 51. UMP-binding positions include aspartate 68 and phenylalanine 116–threonine 122. Threonine 142, tyrosine 148, and aspartate 151 together coordinate ATP.

The protein belongs to the UMP kinase family. As to quaternary structure, homohexamer.

It is found in the cytoplasm. It catalyses the reaction UMP + ATP = UDP + ADP. It participates in pyrimidine metabolism; CTP biosynthesis via de novo pathway; UDP from UMP (UMPK route): step 1/1. Its activity is regulated as follows. Inhibited by UTP. Its function is as follows. Catalyzes the reversible phosphorylation of UMP to UDP. This Hyperthermus butylicus (strain DSM 5456 / JCM 9403 / PLM1-5) protein is Uridylate kinase.